Reading from the N-terminus, the 125-residue chain is uncharacterized protein (125 aa).

2 helical membrane passes run 22–44 (TPLM…NAAV) and 54–73 (YMGI…SVLM).

It belongs to the bacteriophage holin family. Cp-1 holin subfamily.

The protein resides in the cell membrane. This is an uncharacterized protein from Clostridium acetobutylicum (strain ATCC 824 / DSM 792 / JCM 1419 / IAM 19013 / LMG 5710 / NBRC 13948 / NRRL B-527 / VKM B-1787 / 2291 / W).